The sequence spans 1114 residues: Kinesin-like protein KIN-12B (1114 aa).

A disordered region spans residues 1–119 (MRSLFSSKLS…GGGGGDSGVQ (119 aa)). Low complexity predominate over residues 98–107 (SAASPAPEGA). A Kinesin motor domain is found at 117 to 459 (GVQVVVRVRP…LRFAHRAKDI (343 aa)). 197–204 (GQTGSGKT) is a binding site for ATP. Coiled-coil stretches lie at residues 772–810 (VLSA…KNQL) and 999–1043 (ELLV…DQEV). The segment covering 1055–1065 (LPSNVVQSPEP) has biased composition (polar residues). The interval 1055–1081 (LPSNVVQSPEPSETGPARYDTGGSFGD) is disordered.

The protein belongs to the TRAFAC class myosin-kinesin ATPase superfamily. Kinesin family. KIN-12 subfamily.

The polypeptide is Kinesin-like protein KIN-12B (Oryza sativa subsp. japonica (Rice)).